Consider the following 388-residue polypeptide: 1-deoxy-D-xylulose 5-phosphate reductoisomerase (388 aa).

NADPH contacts are provided by Thr10, Gly11, Thr12, Ile13, Arg37, Gln38, and Asn122. 1-deoxy-D-xylulose 5-phosphate is bound at residue Lys123. Glu124 serves as a coordination point for NADPH. Asp148 is a Mn(2+) binding site. 4 residues coordinate 1-deoxy-D-xylulose 5-phosphate: Ser149, Glu150, Ser179, and His202. Glu150 lines the Mn(2+) pocket. Gly208 serves as a coordination point for NADPH. 4 residues coordinate 1-deoxy-D-xylulose 5-phosphate: Ser215, Asn220, Lys221, and Glu224. Glu224 is a binding site for Mn(2+).

It belongs to the DXR family. The cofactor is Mg(2+). It depends on Mn(2+) as a cofactor.

It carries out the reaction 2-C-methyl-D-erythritol 4-phosphate + NADP(+) = 1-deoxy-D-xylulose 5-phosphate + NADPH + H(+). Its pathway is isoprenoid biosynthesis; isopentenyl diphosphate biosynthesis via DXP pathway; isopentenyl diphosphate from 1-deoxy-D-xylulose 5-phosphate: step 1/6. Catalyzes the NADPH-dependent rearrangement and reduction of 1-deoxy-D-xylulose-5-phosphate (DXP) to 2-C-methyl-D-erythritol 4-phosphate (MEP). This is 1-deoxy-D-xylulose 5-phosphate reductoisomerase from Laribacter hongkongensis (strain HLHK9).